The sequence spans 484 residues: NADH-quinone oxidoreductase subunit N (484 aa).

A run of 13 helical transmembrane segments spans residues Leu-10 to Phe-30, Phe-40 to Gly-60, Ser-74 to Thr-94, Phe-108 to Leu-128, Leu-129 to His-149, Phe-163 to Ala-183, Leu-203 to Ala-223, Pro-237 to Met-257, Glu-272 to Val-292, Met-299 to Thr-319, Leu-327 to Leu-347, Tyr-370 to Phe-390, and Gly-404 to Leu-424.

The protein belongs to the complex I subunit 2 family. In terms of assembly, NDH-1 is composed of 14 different subunits. Subunits NuoA, H, J, K, L, M, N constitute the membrane sector of the complex.

It is found in the cell inner membrane. It carries out the reaction a quinone + NADH + 5 H(+)(in) = a quinol + NAD(+) + 4 H(+)(out). Its function is as follows. NDH-1 shuttles electrons from NADH, via FMN and iron-sulfur (Fe-S) centers, to quinones in the respiratory chain. The immediate electron acceptor for the enzyme in this species is believed to be ubiquinone. Couples the redox reaction to proton translocation (for every two electrons transferred, four hydrogen ions are translocated across the cytoplasmic membrane), and thus conserves the redox energy in a proton gradient. In Halorhodospira halophila (strain DSM 244 / SL1) (Ectothiorhodospira halophila (strain DSM 244 / SL1)), this protein is NADH-quinone oxidoreductase subunit N.